We begin with the raw amino-acid sequence, 591 residues long: Protein phosphatase EYA1 (591 aa).

Disordered stretches follow at residues 1–95, 150–169, and 239–319; these read MEMQ…SYPH, GLSQSQSPGQTGFLSYGTSF, and MTSS…PDSD. Positions 8–23 are enriched in low complexity; that stretch reads SPHSRLSGSSESPSGP. The span at 28 to 53 shows a compositional bias: polar residues; it reads SHINSTSMTPNGTEVKTEPMSSSEIA. Low complexity predominate over residues 56–75; it reads AADGSLDSFSGSALGSSSFS. The span at 78-87 shows a compositional bias: pro residues; that stretch reads PAHPFSPPQI. The span at 240–252 shows a compositional bias: low complexity; the sequence is TSSNTSPTTPSTN. Over residues 253–286 the composition is skewed to polar residues; sequence ATYQLQEPPSGVTSQAVTDPTAEYSTIHSPSTPI. Basic and acidic residues predominate over residues 287–302; sequence KETDSERLRRGSDGKS. The active-site Nucleophile is the aspartate 327. Positions 327, 329, and 555 each coordinate Mg(2+). Aspartate 329 (proton donor) is an active-site residue.

This sequence belongs to the HAD-like hydrolase superfamily. EYA family. As to quaternary structure, probably interacts with SIX2, SIX4 and SIX5. Interacts with H2AX in response to DNA damage. Interacts with SIX3; promotes EYA1 translocation to the nucleus. The cofactor is Mg(2+). In terms of processing, sumoylated with SUMO1. Extensively expressed in cranial placodes, branchial arches, CNS and developing eye and nose.

Its subcellular location is the cytoplasm. It is found in the nucleus. It carries out the reaction O-phospho-L-tyrosyl-[protein] + H2O = L-tyrosyl-[protein] + phosphate. It catalyses the reaction O-phospho-L-seryl-[protein] + H2O = L-seryl-[protein] + phosphate. The catalysed reaction is O-phospho-L-threonyl-[protein] + H2O = L-threonyl-[protein] + phosphate. Its function is as follows. Functions both as protein phosphatase and as transcriptional coactivator for SIX1, and probably also for SIX2, SIX4 and SIX5. Tyrosine phosphatase that dephosphorylates 'Tyr-142' of histone H2AX (H2AXY142ph) and promotes efficient DNA repair via the recruitment of DNA repair complexes containing MDC1. 'Tyr-142' phosphorylation of histone H2AX plays a central role in DNA repair and acts as a mark that distinguishes between apoptotic and repair responses to genotoxic stress. Its function as histone phosphatase may contribute to its function in transcription regulation during organogenesis. Also has phosphatase activity with proteins phosphorylated on Ser and Thr residues (in vitro). Required for normal embryonic development of the craniofacial and trunk skeleton, kidneys and ears. Together with SIX1, it plays an important role in hypaxial muscle development; in this it is functionally redundant with EYA2. This is Protein phosphatase EYA1 (Eya1) from Mus musculus (Mouse).